A 417-amino-acid chain; its full sequence is NADH-quinone oxidoreductase subunit D (417 aa).

The protein belongs to the complex I 49 kDa subunit family. In terms of assembly, NDH-1 is composed of 14 different subunits. Subunits NuoB, C, D, E, F, and G constitute the peripheral sector of the complex.

It localises to the cell inner membrane. The catalysed reaction is a quinone + NADH + 5 H(+)(in) = a quinol + NAD(+) + 4 H(+)(out). In terms of biological role, NDH-1 shuttles electrons from NADH, via FMN and iron-sulfur (Fe-S) centers, to quinones in the respiratory chain. The immediate electron acceptor for the enzyme in this species is believed to be ubiquinone. Couples the redox reaction to proton translocation (for every two electrons transferred, four hydrogen ions are translocated across the cytoplasmic membrane), and thus conserves the redox energy in a proton gradient. The chain is NADH-quinone oxidoreductase subunit D from Herminiimonas arsenicoxydans.